Here is a 157-residue protein sequence, read N- to C-terminus: Protein Smg (157 aa).

It belongs to the Smg family.

This is Protein Smg from Shigella boydii serotype 4 (strain Sb227).